The chain runs to 231 residues: Large ribosomal subunit protein uL1 (231 aa).

This sequence belongs to the universal ribosomal protein uL1 family. In terms of assembly, part of the 50S ribosomal subunit.

Binds directly to 23S rRNA. The L1 stalk is quite mobile in the ribosome, and is involved in E site tRNA release. In terms of biological role, protein L1 is also a translational repressor protein, it controls the translation of the L11 operon by binding to its mRNA. This chain is Large ribosomal subunit protein uL1, found in Shouchella clausii (strain KSM-K16) (Alkalihalobacillus clausii).